A 338-amino-acid chain; its full sequence is DNA-directed RNA polymerase subunit alpha (338 aa).

The alpha N-terminal domain (alpha-NTD) stretch occupies residues M1–N225. An alpha C-terminal domain (alpha-CTD) region spans residues Y242–E338. The interval F314–E338 is disordered.

This sequence belongs to the RNA polymerase alpha chain family. As to quaternary structure, homodimer. The RNAP catalytic core consists of 2 alpha, 1 beta, 1 beta' and 1 omega subunit. When a sigma factor is associated with the core the holoenzyme is formed, which can initiate transcription.

It carries out the reaction RNA(n) + a ribonucleoside 5'-triphosphate = RNA(n+1) + diphosphate. DNA-dependent RNA polymerase catalyzes the transcription of DNA into RNA using the four ribonucleoside triphosphates as substrates. This Corynebacterium diphtheriae (strain ATCC 700971 / NCTC 13129 / Biotype gravis) protein is DNA-directed RNA polymerase subunit alpha.